We begin with the raw amino-acid sequence, 464 residues long: Propanal dehydrogenase (CoA-propanoylating) (464 aa).

The interval Met-1–Leu-18 is targets protein to the BMC.

Belongs to the EutE/PduP family. As to quaternary structure, interacts with BMC shell proteins PduA and PduJ, which target this protein to BMC. Interacts with PduQ, probably via the N-terminus of PduQ. Interacts with PduK, probably with its BMC-containing N-terminus.

The protein resides in the bacterial microcompartment. It catalyses the reaction propanal + NAD(+) + CoA = propanoyl-CoA + NADH + H(+). The protein operates within polyol metabolism; 1,2-propanediol degradation. A CoA-acylating aldehyde dehydrogenase required for optimal 1,2-propanediol (1,2-PD) degradation. Optimizes growth in the bacterial microcompartment (BMC) dedicated to 1,2-PD degradation by minimizing propionaldehyde toxicity. Directly targeted to the BMC. NAD(+) and NADH are regenerated internally within the Pdu BMC by the PduP and PduQ enzymes, which reduce NAD(+) and oxidize NADH respectively, although there must also be cofactor transport across the BMC. In terms of biological role, the 1,2-PD-specific bacterial microcompartment (BMC) concentrates low levels of 1,2-PD catabolic enzymes, concentrates volatile reaction intermediates thus enhancing pathway flux and keeps the level of toxic, mutagenic propionaldehyde low. This chain is Propanal dehydrogenase (CoA-propanoylating), found in Salmonella typhimurium (strain LT2 / SGSC1412 / ATCC 700720).